Consider the following 1146-residue polypeptide: Myosin heavy chain kinase A (1146 aa).

The segment at 1–25 (MFNIKKRKESITGIPPINVNSPQSV) is disordered. Positions 100 to 120 (EQMEDQLEKTMKVVRNHTDSL) form a coiled coil. The disordered stretch occupies residues 158-191 (IQEKKSTSSPLVKGGISGGGGSGGDDSFDGANIS). Positions 172 to 181 (GISGGGGSGG) are enriched in gly residues. Coiled-coil stretches lie at residues 187 to 241 (GANI…KRIE) and 297 to 502 (SKIE…ASIS). The tract at residues 500–551 (SISPISSVPKSPITTKRSSIILNSPPMTSQQSSPKIQDLLSSSGSSSVSGIN) is pseudosubstrate/autoinhibitory domain. The span at 521 to 534 (LNSPPMTSQQSSPK) shows a compositional bias: polar residues. The segment at 521–540 (LNSPPMTSQQSSPKIQDLLS) is disordered. The interval 552 to 852 (ISSETGEMGI…KVGAKQLPKA (301 aa)) is catalytic. One can recognise an Alpha-type protein kinase domain in the interval 564–808 (EFDPIINKWI…VCALLDLDVK (245 aa)). Position 778 to 783 (778 to 783 (GLGNLG)) interacts with ATP. 7 WD repeats span residues 867-897 (SFRE…RVFD), 910-938 (GHRK…KVHI), 952-980 (GHTG…KVWD), 993-1021 (VHTK…YVWD), 1033-1061 (GHED…KIWD), 1073-1101 (GHWN…KVWD), and 1114-1142 (SHSL…KVWE).

It belongs to the protein kinase superfamily. Alpha-type protein kinase family. ALPK subfamily. Oligomer. Mg(2+) serves as cofactor. It depends on Mn(2+) as a cofactor. The N-terminus is blocked.

The catalysed reaction is L-threonyl-[myosin heavy-chain] + ATP = O-phospho-L-threonyl-[myosin heavy-chain] + ADP + H(+). Catalyzes its autophosphorylation, which is needed for enzymatic activity and phosphorylates myosin II heavy chain at a threonine in the C-terminal tail region. This phosphorylation is critical for regulating the assembly and disassembly of myosin II filament, affecting myosin localization during an array of cellular contractile events, including cytokinesis and capping of cell surface receptors as well as chemotactic cell locomotion. In Dictyostelium discoideum (Social amoeba), this protein is Myosin heavy chain kinase A (mhkA).